A 201-amino-acid polypeptide reads, in one-letter code: 3-isopropylmalate dehydratase small subunit 1 (201 aa).

The protein belongs to the LeuD family. LeuD type 1 subfamily. In terms of assembly, heterodimer of LeuC and LeuD.

The enzyme catalyses (2R,3S)-3-isopropylmalate = (2S)-2-isopropylmalate. It functions in the pathway amino-acid biosynthesis; L-leucine biosynthesis; L-leucine from 3-methyl-2-oxobutanoate: step 2/4. In terms of biological role, catalyzes the isomerization between 2-isopropylmalate and 3-isopropylmalate, via the formation of 2-isopropylmaleate. The chain is 3-isopropylmalate dehydratase small subunit 1 from Salmonella typhimurium (strain LT2 / SGSC1412 / ATCC 700720).